A 35-amino-acid polypeptide reads, in one-letter code: Photosystem II reaction center protein T (35 aa).

A helical membrane pass occupies residues 3–23; the sequence is ALVYTFLLVGTLGIIFFAIFF.

This sequence belongs to the PsbT family. As to quaternary structure, PSII is composed of 1 copy each of membrane proteins PsbA, PsbB, PsbC, PsbD, PsbE, PsbF, PsbH, PsbI, PsbJ, PsbK, PsbL, PsbM, PsbT, PsbY, PsbZ, Psb30/Ycf12, at least 3 peripheral proteins of the oxygen-evolving complex and a large number of cofactors. It forms dimeric complexes.

It is found in the plastid. It localises to the chloroplast thylakoid membrane. Its function is as follows. Found at the monomer-monomer interface of the photosystem II (PS II) dimer, plays a role in assembly and dimerization of PSII. PSII is a light-driven water plastoquinone oxidoreductase, using light energy to abstract electrons from H(2)O, generating a proton gradient subsequently used for ATP formation. This chain is Photosystem II reaction center protein T, found in Zygnema circumcarinatum (Green alga).